Consider the following 366-residue polypeptide: Histidinol-phosphate aminotransferase (366 aa).

Position 228 is an N6-(pyridoxal phosphate)lysine (Lys-228).

This sequence belongs to the class-II pyridoxal-phosphate-dependent aminotransferase family. Histidinol-phosphate aminotransferase subfamily. Homodimer. It depends on pyridoxal 5'-phosphate as a cofactor.

It catalyses the reaction L-histidinol phosphate + 2-oxoglutarate = 3-(imidazol-4-yl)-2-oxopropyl phosphate + L-glutamate. It functions in the pathway amino-acid biosynthesis; L-histidine biosynthesis; L-histidine from 5-phospho-alpha-D-ribose 1-diphosphate: step 7/9. This chain is Histidinol-phosphate aminotransferase, found in Campylobacter fetus subsp. fetus (strain 82-40).